Here is a 360-residue protein sequence, read N- to C-terminus: Ubiquitin carboxyl-terminal hydrolase MIY1 (360 aa).

The active-site Nucleophile is the Cys-28. His-216 (proton acceptor) is an active-site residue. Residues 317-360 are disordered; the sequence is KRKIHSHKKNSEIHAPVKKDKFKRRSSLLNAKASEKEKSECVVM. Basic and acidic residues-rich tracts occupy residues 325–335 and 349–360; these read KNSEIHAPVKK and ASEKEKSECVVM.

This sequence belongs to the MINDY deubiquitinase family. FAM63 subfamily.

Its subcellular location is the cytoplasm. It carries out the reaction Thiol-dependent hydrolysis of ester, thioester, amide, peptide and isopeptide bonds formed by the C-terminal Gly of ubiquitin (a 76-residue protein attached to proteins as an intracellular targeting signal).. In terms of biological role, hydrolase that can specifically remove 'Lys-48'-linked conjugated ubiquitin from proteins. Has endodeubiquitinase activity. This chain is Ubiquitin carboxyl-terminal hydrolase MIY1, found in Saccharomyces cerevisiae (strain ATCC 204508 / S288c) (Baker's yeast).